Here is a 231-residue protein sequence, read N- to C-terminus: MAGLVDFQDEEQVKSFLENMEVECHYQCYREKDPEGCYRLVDYLEGIQKNFDEAAKVLKFNCEKYGHGDSCYKLGAYYVTGKGGLTQDLKAASSCFLMACEKPGKKSVESCHNVGLLAHDGQVNEDGQPDLGKARDYYSRACDGGYAASCFNLSAMFLQGAPGFPKDMGLACKYSMKACDLGHVWACANASRMYKLGDGVDKDEAKAEVLKNRARQLHKEQQKNVQPLTFG.

Alanine 2 carries the N-acetylalanine modification. 5 Sel1-like repeats span residues 34 to 66, 68 to 104, 108 to 146, 147 to 183, and 184 to 219; these read PEGC…EKYG, GDSC…EKPG, VESC…DGGY, AASC…DLGH, and VWAC…QLHK.

This sequence belongs to the hcp beta-lactamase family. In terms of assembly, interacts with CHCHD4/MIA40 through transient intermolecular disulfide bonds.

The protein localises to the mitochondrion intermembrane space. Its function is as follows. Required for assembly of mitochondrial respiratory chain complex I and complex IV. In Mus musculus (Mouse), this protein is Cytochrome c oxidase assembly factor 7 (Coa7).